A 512-amino-acid polypeptide reads, in one-letter code: 2,3-bisphosphoglycerate-independent phosphoglycerate mutase (512 aa).

Residues aspartate 11 and serine 61 each contribute to the Mn(2+) site. Serine 61 functions as the Phosphoserine intermediate in the catalytic mechanism. Substrate-binding positions include histidine 122, 152–153 (RD), arginine 184, arginine 190, 259–262 (RADR), and lysine 332. Mn(2+)-binding residues include aspartate 399, histidine 403, aspartate 440, histidine 441, and histidine 459.

The protein belongs to the BPG-independent phosphoglycerate mutase family. Monomer. Mn(2+) is required as a cofactor.

It catalyses the reaction (2R)-2-phosphoglycerate = (2R)-3-phosphoglycerate. Its pathway is carbohydrate degradation; glycolysis; pyruvate from D-glyceraldehyde 3-phosphate: step 3/5. Functionally, catalyzes the interconversion of 2-phosphoglycerate and 3-phosphoglycerate. The protein is 2,3-bisphosphoglycerate-independent phosphoglycerate mutase of Francisella tularensis subsp. tularensis (strain FSC 198).